We begin with the raw amino-acid sequence, 128 residues long: MNIRNTLVLLVSTVLVLMSCSIGCYAGSPNCVGAPSGQVYIFSSWDFQGDRYVYNISQGQTTLPDSFIHNVQSFTSGSEICFASCNPLETYQISAGQSHRNYAALENFGQRMNLIIPGNCSNLVCPSN.

An N-terminal signal peptide occupies residues 1–26 (MNIRNTLVLLVSTVLVLMSCSIGCYA). N-linked (GlcNAc...) asparagine glycans are attached at residues asparagine 55 and asparagine 119.

It belongs to the Dictyostelium gerABC family.

The protein resides in the secreted. The sequence is that of Spore germination protein 1/2/3-related protein from Dictyostelium discoideum (Social amoeba).